Reading from the N-terminus, the 425-residue chain is Polyribonucleotide 5'-hydroxyl-kinase Clp1 (425 aa).

ATP-binding positions include Glu22, Lys62, and 124–129; that span reads DVGKST.

The protein belongs to the Clp1 family. Clp1 subfamily. As to quaternary structure, component of the tRNA splicing endonuclease complex. Component of pre-mRNA cleavage complex II (CF-II).

It is found in the nucleus. The catalysed reaction is a 5'-end dephospho-2'-deoxyribonucleoside-DNA + ATP = a 5'-end 5'-phospho-2'-deoxyribonucleoside-DNA + ADP + H(+). It catalyses the reaction a 5'-end dephospho-ribonucleoside-RNA + ATP = a 5'-end 5'-phospho-ribonucleoside-RNA + ADP + H(+). Functionally, polynucleotide kinase that can phosphorylate the 5'-hydroxyl groups of double-stranded RNA (dsRNA), single-stranded RNA (ssRNA), double stranded DNA (dsDNA) and double-stranded DNA:RNA hybrids. dsRNA is phosphorylated more efficiently than dsDNA, and the RNA component of a DNA:RNA hybrid is phosphorylated more efficiently than the DNA component. Plays a role in both tRNA splicing and mRNA 3'-end formation. Component of the tRNA splicing endonuclease complex: phosphorylates the 5'-terminus of the tRNA 3'-exon during tRNA splicing; this phosphorylation event is a prerequisite for the subsequent ligation of the two exon halves and the production of a mature tRNA. Its role in tRNA splicing and maturation is required for cerebellar development. Component of the pre-mRNA cleavage complex II (CF-II), which seems to be required for mRNA 3'-end formation. Also phosphorylates the 5'-terminus of exogenously introduced short interfering RNAs (siRNAs), which is a necessary prerequisite for their incorporation into the RNA-induced silencing complex (RISC). However, endogenous siRNAs and microRNAs (miRNAs) that are produced by the cleavage of dsRNA precursors by dicer1 already contain a 5'-phosphate group, so this protein may be dispensible for normal RNA-mediated gene silencing. This Gallus gallus (Chicken) protein is Polyribonucleotide 5'-hydroxyl-kinase Clp1.